Here is a 143-residue protein sequence, read N- to C-terminus: Large ribosomal subunit protein uL16 (143 aa).

Belongs to the universal ribosomal protein uL16 family. Part of the 50S ribosomal subunit.

In terms of biological role, binds 23S rRNA and is also seen to make contacts with the A and possibly P site tRNAs. This Fusobacterium nucleatum subsp. nucleatum (strain ATCC 25586 / DSM 15643 / BCRC 10681 / CIP 101130 / JCM 8532 / KCTC 2640 / LMG 13131 / VPI 4355) protein is Large ribosomal subunit protein uL16.